We begin with the raw amino-acid sequence, 402 residues long: S-adenosylmethionine synthase (402 aa).

ATP is bound at residue 137-142; it reads GQGSAD.

Belongs to the AdoMet synthase 2 family. Mg(2+) serves as cofactor.

The catalysed reaction is L-methionine + ATP + H2O = S-adenosyl-L-methionine + phosphate + diphosphate. It functions in the pathway amino-acid biosynthesis; S-adenosyl-L-methionine biosynthesis; S-adenosyl-L-methionine from L-methionine: step 1/1. Functionally, catalyzes the formation of S-adenosylmethionine from methionine and ATP. This is S-adenosylmethionine synthase from Pyrobaculum neutrophilum (strain DSM 2338 / JCM 9278 / NBRC 100436 / V24Sta) (Thermoproteus neutrophilus).